The sequence spans 67 residues: Large ribosomal subunit protein bL32 (67 aa).

Basic residues predominate over residues 1–19; it reads MAVPKRKMSRANTRARRAQ. The tract at residues 1–20 is disordered; it reads MAVPKRKMSRANTRARRAQW.

Belongs to the bacterial ribosomal protein bL32 family.

This Paenarthrobacter aurescens (strain TC1) protein is Large ribosomal subunit protein bL32.